The primary structure comprises 512 residues: Extracellular serine/threonine protein kinase CeFam20 (512 aa).

The Cytoplasmic portion of the chain corresponds to 1–6 (MRCNIK). The chain crosses the membrane as a helical; Signal-anchor for type II membrane protein span at residues 7–26 (RLFTLAIGVFAATLVIISFS). At 27–512 (KDNYEREWKQ…QDKKDDKKTV (486 aa)) the chain is on the lumenal side. A disulfide bond links Cys-110 and Cys-144. Asn-113 carries an N-linked (GlcNAc...) asparagine glycan. Gln-176, Lys-192, and Glu-213 together coordinate ATP. Residue Glu-213 participates in Mn(2+) binding. Residue Asn-242 is glycosylated (N-linked (GlcNAc...) asparagine). Intrachain disulfides connect Cys-268/Cys-284 and Cys-273/Cys-277. 295–298 (QVFL) contacts ATP. Intrachain disulfides connect Cys-333–Cys-409 and Cys-410–Cys-469. Asp-366 is a catalytic residue. ATP is bound by residues Glu-371 and Asp-387. Residue Asp-387 coordinates Mn(2+). A disordered region spans residues 486 to 512 (PDVSDAEQNDEEQSEEHQDKKDDKKTV). Positions 489-499 (SDAEQNDEEQS) are enriched in acidic residues. A compositionally biased stretch (basic and acidic residues) spans 500–512 (EEHQDKKDDKKTV).

This sequence belongs to the FAM20 family. Mn(2+) serves as cofactor.

The protein resides in the golgi apparatus membrane. It localises to the secreted. It carries out the reaction L-seryl-[protein] + ATP = O-phospho-L-seryl-[protein] + ADP + H(+). The catalysed reaction is L-threonyl-[protein] + ATP = O-phospho-L-threonyl-[protein] + ADP + H(+). Functionally, golgi serine/threonine protein kinase that phosphorylates secretory pathway proteins within Ser-x-Glu/pSer motifs. In Caenorhabditis elegans, this protein is Extracellular serine/threonine protein kinase CeFam20.